A 333-amino-acid chain; its full sequence is Anthranilate phosphoribosyltransferase (333 aa).

Residues G81, 84–85 (GN), T89, 91–94 (NIST), 109–117 (KHGNRSVSS), and A121 contribute to the 5-phospho-alpha-D-ribose 1-diphosphate site. G81 is a binding site for anthranilate. Position 93 (S93) interacts with Mg(2+). N112 contacts anthranilate. Residue R167 participates in anthranilate binding. Residues D225 and E226 each contribute to the Mg(2+) site.

Belongs to the anthranilate phosphoribosyltransferase family. In terms of assembly, homodimer. The cofactor is Mg(2+).

It catalyses the reaction N-(5-phospho-beta-D-ribosyl)anthranilate + diphosphate = 5-phospho-alpha-D-ribose 1-diphosphate + anthranilate. The protein operates within amino-acid biosynthesis; L-tryptophan biosynthesis; L-tryptophan from chorismate: step 2/5. Functionally, catalyzes the transfer of the phosphoribosyl group of 5-phosphorylribose-1-pyrophosphate (PRPP) to anthranilate to yield N-(5'-phosphoribosyl)-anthranilate (PRA). The chain is Anthranilate phosphoribosyltransferase from Haemophilus influenzae (strain ATCC 51907 / DSM 11121 / KW20 / Rd).